The following is a 706-amino-acid chain: Glycine--tRNA ligase beta subunit (706 aa).

The protein belongs to the class-II aminoacyl-tRNA synthetase family. Tetramer of two alpha and two beta subunits.

It localises to the cytoplasm. The enzyme catalyses tRNA(Gly) + glycine + ATP = glycyl-tRNA(Gly) + AMP + diphosphate. The protein is Glycine--tRNA ligase beta subunit of Acidobacterium capsulatum (strain ATCC 51196 / DSM 11244 / BCRC 80197 / JCM 7670 / NBRC 15755 / NCIMB 13165 / 161).